A 723-amino-acid chain; its full sequence is Polyribonucleotide nucleotidyltransferase (723 aa).

2 residues coordinate Mg(2+): Asp-488 and Asp-494. The KH domain maps to 555-614 (PKIITLNIKPEKIKDVIGPGGKQINAIIDETGVKIDIEQDGTVYIASQDQAMNRKAIAII). The S1 motif domain occupies 624-692 (GEVYTGKVRR…QQGRVNLSRK (69 aa)). Residues 692–723 (KALLEKKEQPEGDKKPQAEKKFYPKTKKPESK) form a disordered region. Residues 693–723 (ALLEKKEQPEGDKKPQAEKKFYPKTKKPESK) show a composition bias toward basic and acidic residues.

It belongs to the polyribonucleotide nucleotidyltransferase family. Mg(2+) is required as a cofactor.

The protein resides in the cytoplasm. It carries out the reaction RNA(n+1) + phosphate = RNA(n) + a ribonucleoside 5'-diphosphate. Its function is as follows. Involved in mRNA degradation. Catalyzes the phosphorolysis of single-stranded polyribonucleotides processively in the 3'- to 5'-direction. The sequence is that of Polyribonucleotide nucleotidyltransferase from Listeria monocytogenes serotype 4a (strain HCC23).